Here is a 434-residue protein sequence, read N- to C-terminus: Ribitol-5-phosphate xylosyltransferase 1 (434 aa).

Residues M1 to K7 are Cytoplasmic-facing. Residues I8–F28 form a helical; Signal-anchor for type II membrane protein membrane-spanning segment. Residues F29–T434 lie on the Extracellular side of the membrane.

The protein belongs to the TMEM5 family.

The protein localises to the golgi apparatus membrane. It carries out the reaction 3-O-[Rib-ol-P-Rib-ol-P-3-beta-D-GalNAc-(1-&gt;3)-beta-D-GlcNAc-(1-&gt;4)-(O-6-P-alpha-D-Man)]-Thr-[protein] + UDP-alpha-D-xylose = 3-O-[beta-D-Xyl-(1-&gt;4)-Rib-ol-P-Rib-ol-P-3-beta-D-GalNAc-(1-&gt;3)-beta-D-GlcNAc-(1-&gt;4)-(O-6-P-alpha-D-Man)]-Thr-[protein] + UDP + H(+). It functions in the pathway protein modification; protein glycosylation. In terms of biological role, acts as a UDP-D-xylose:ribitol-5-phosphate beta1,4-xylosyltransferase, which catalyzes the transfer of UDP-D-xylose to ribitol 5-phosphate (Rbo5P) to form the Xylbeta1-4Rbo5P linkage on O-mannosyl glycan. Participates in the biosynthesis of the phosphorylated O-mannosyl trisaccharide (N-acetylgalactosamine-beta-3-N-acetylglucosamine-beta-4-(phosphate-6-)mannose), a carbohydrate structure present in alpha-dystroglycan (DAG1), which is required for binding laminin G-like domain-containing extracellular proteins with high affinity. This chain is Ribitol-5-phosphate xylosyltransferase 1 (rxylt1), found in Danio rerio (Zebrafish).